Consider the following 313-residue polypeptide: D-alanine--D-alanine ligase (313 aa).

One can recognise an ATP-grasp domain in the interval 108 to 308 (KLVWQQLGIP…YQELVVGVLA (201 aa)). 138–193 (VAKLGLPLFVKPASEGSSVAVIKVKSADALPAALIEAVKYDKIVVVEKSVEGGGEY) serves as a coordination point for ATP. The Mg(2+) site is built by Asp-262, Glu-275, and Asn-277.

The protein belongs to the D-alanine--D-alanine ligase family. It depends on Mg(2+) as a cofactor. The cofactor is Mn(2+).

It localises to the cytoplasm. The catalysed reaction is 2 D-alanine + ATP = D-alanyl-D-alanine + ADP + phosphate + H(+). Its pathway is cell wall biogenesis; peptidoglycan biosynthesis. Functionally, cell wall formation. The sequence is that of D-alanine--D-alanine ligase from Paraburkholderia phytofirmans (strain DSM 17436 / LMG 22146 / PsJN) (Burkholderia phytofirmans).